The sequence spans 490 residues: Nuclear transcription factor Y subunit beta (490 aa).

The disordered stretch occupies residues 1-48 (MSGNEDFIYDDNSSSSISNQTDGGGGGGSSNNNSGGNANNNNNEGDRE). Residues 30–43 (SNNNSGGNANNNNN) are compositionally biased toward low complexity. Residues 53 to 59 (LPIANII) mediate DNA binding. The segment at 80-91 (VQDCVSEFISFI) is subunit association domain (SAD). Disordered stretches follow at residues 139–195 (EKNS…QQQQ) and 221–264 (QQQQ…NQQY). The segment covering 181–195 (QQQQQPPQVQQQQQQ) has biased composition (low complexity). The stretch at 188 to 219 (QVQQQQQQQQQQQQQQLQQQQQLQQHQQQQLQ) forms a coiled coil. Residues 269–307 (QQQQQQQQQQQQQQQQQQQQQQQQQQQQQQQQQQQQQVQ) adopt a coiled-coil conformation. Disordered stretches follow at residues 325–370 (NQQA…QHLQ) and 399–490 (QFSN…PSTS). The segment covering 399 to 468 (QFSNNNNNNN…GNSLHNSGNS (70 aa)) has biased composition (low complexity). Positions 478–490 (PYISTNPEYPSTS) are enriched in polar residues.

Belongs to the NFYB/HAP3 subunit family. Heterotrimeric transcription factor composed of three components, nfyA, nfyB and nfyC. nfyB and nfyC must interact and dimerize for nfyA association and DNA binding.

The protein localises to the nucleus. Component of the NF-Y/HAP transcription factor complex. The NF-Y complex stimulates the transcription of various genes by recognizing and binding to a CCAAT motif in promoters. The chain is Nuclear transcription factor Y subunit beta (nfyB) from Dictyostelium discoideum (Social amoeba).